Consider the following 704-residue polypeptide: Tetratricopeptide repeat protein 12 (704 aa).

Thr71 is modified (phosphothreonine). TPR repeat units lie at residues 105–138, 139–172, and 173–206; these read ADAL…LKDM, KVLY…DENC, and TKAY…NPKL.

Its subcellular location is the cytoplasm. Cytoplasmic protein that plays a role in the proper assembly of dynein arm complexes in motile cilia in both respiratory cells and sperm flagella. In Mus musculus (Mouse), this protein is Tetratricopeptide repeat protein 12 (Ttc12).